Consider the following 272-residue polypeptide: Orotidine 5'-phosphate decarboxylase (272 aa).

The Proton donor role is filled by Lys-95.

It belongs to the OMP decarboxylase family. Type 2 subfamily.

The enzyme catalyses orotidine 5'-phosphate + H(+) = UMP + CO2. The protein operates within pyrimidine metabolism; UMP biosynthesis via de novo pathway; UMP from orotate: step 2/2. This is Orotidine 5'-phosphate decarboxylase from Cupriavidus metallidurans (strain ATCC 43123 / DSM 2839 / NBRC 102507 / CH34) (Ralstonia metallidurans).